A 337-amino-acid polypeptide reads, in one-letter code: Glyceraldehyde-3-phosphate dehydrogenase 1, cytosolic (337 aa).

The interval 1 to 151 is binding to NAD; that stretch reads MGKIKIGING…YTSDVNIVSN (151 aa). NAD(+) contacts are provided by residues 13–14, aspartate 35, and arginine 82; that span reads RI. The segment at 152–337 is catalytic; the sequence is ASCTTNCLAP…DLIRHMFKTQ (186 aa). D-glyceraldehyde 3-phosphate-binding positions include 153–155, threonine 184, 213–214, and arginine 236; these read SCT and TG. Catalysis depends on cysteine 154, which acts as the Nucleophile. Asparagine 318 serves as a coordination point for NAD(+).

This sequence belongs to the glyceraldehyde-3-phosphate dehydrogenase family. In terms of assembly, homotetramer.

The protein localises to the cytoplasm. It carries out the reaction D-glyceraldehyde 3-phosphate + phosphate + NAD(+) = (2R)-3-phospho-glyceroyl phosphate + NADH + H(+). Its pathway is carbohydrate degradation; glycolysis; pyruvate from D-glyceraldehyde 3-phosphate: step 1/5. Its function is as follows. Key enzyme in glycolysis that catalyzes the first step of the pathway by converting D-glyceraldehyde 3-phosphate (G3P) into 3-phospho-D-glyceroyl phosphate. Essential for the maintenance of cellular ATP levels and carbohydrate metabolism. The chain is Glyceraldehyde-3-phosphate dehydrogenase 1, cytosolic (GAPC1) from Zea mays (Maize).